Consider the following 504-residue polypeptide: Fibroblast growth factor receptor-like 1 (504 aa).

An N-terminal signal peptide occupies residues 1–24; sequence MTPSPLLLLLLPPLLLGAFPPAAA. Residues 25-378 lie on the Extracellular side of the membrane; the sequence is ARGPPKMADK…SSSATSLPWP (354 aa). The Ig-like C2-type 1 domain maps to 29 to 115; the sequence is PKMADKVVPR…GSLSVNYTLV (87 aa). A disulfide bond links Cys-51 and Cys-99. Asn-111 carries an N-linked (GlcNAc...) asparagine glycan. The segment at 123 to 155 is disordered; the sequence is GKESLGPDSSSGGQEDPASQQWARPRFTQPSKM. Positions 129 to 144 are enriched in polar residues; the sequence is PDSSSGGQEDPASQQW. Ig-like C2-type domains lie at 147-237 and 246-354; these read PRFT…YKVD and PVLT…AFLT. A disulfide bond links Cys-172 and Cys-221. Residues Asn-231, Asn-255, and Asn-293 are each glycosylated (N-linked (GlcNAc...) asparagine). Cys-268 and Cys-338 are oxidised to a cystine. The helical transmembrane segment at 379-399 threads the bilayer; it reads VVIGIPAGAVFILGTLLLWLC. Over 400-504 the chain is Cytoplasmic; the sequence is QAQKKPCTPA…KVHQHIHYQC (105 aa). Positions 407-418 are enriched in pro residues; sequence TPAPAPPLPGHR. Residues 407–435 are disordered; the sequence is TPAPAPPLPGHRPPGTARDRSGDKDLPSL. Residues 423–432 are compositionally biased toward basic and acidic residues; it reads ARDRSGDKDL.

As to quaternary structure, interacts with FGF2 with a low affinity. In terms of tissue distribution, expressed preferentially in cartilaginous tissues and pancreas. Highly expressed in the liver, kidney, heart, brain and skeletal muscle. Weakly expressed in the lung, small intestine and spleen.

It localises to the membrane. Functionally, has a negative effect on cell proliferation. The polypeptide is Fibroblast growth factor receptor-like 1 (FGFRL1) (Homo sapiens (Human)).